The chain runs to 82 residues: Histidine-rich protein (82 aa).

This Plasmodium falciparum (isolate fcm17 / Senegal) protein is Histidine-rich protein.